The primary structure comprises 105 residues: DNA-directed RNA polymerase subunit omega (105 aa).

The protein belongs to the RNA polymerase subunit omega family. The RNAP catalytic core consists of 2 alpha, 1 beta, 1 beta' and 1 omega subunit. When a sigma factor is associated with the core the holoenzyme is formed, which can initiate transcription.

The enzyme catalyses RNA(n) + a ribonucleoside 5'-triphosphate = RNA(n+1) + diphosphate. Promotes RNA polymerase assembly. Latches the N- and C-terminal regions of the beta' subunit thereby facilitating its interaction with the beta and alpha subunits. The chain is DNA-directed RNA polymerase subunit omega from Streptococcus mutans serotype c (strain ATCC 700610 / UA159).